The primary structure comprises 145 residues: MRALIQRVSHASVTVDGVVVGQTGPGLLVLVCAMAGDGEAQADQLAAKIARLRIFKDEAGKMNRSVLDIGGAALVVSQFTLAADTRSGNRPGFSSAAPPAEGERIYEYFAAQLAAQGVPVETGRFGADMKVELLNDGPVTIWMDI.

Residues 137-138 (GP) carry the Gly-cisPro motif, important for rejection of L-amino acids motif.

The protein belongs to the DTD family. Homodimer.

It is found in the cytoplasm. It catalyses the reaction glycyl-tRNA(Ala) + H2O = tRNA(Ala) + glycine + H(+). It carries out the reaction a D-aminoacyl-tRNA + H2O = a tRNA + a D-alpha-amino acid + H(+). Its function is as follows. An aminoacyl-tRNA editing enzyme that deacylates mischarged D-aminoacyl-tRNAs. Also deacylates mischarged glycyl-tRNA(Ala), protecting cells against glycine mischarging by AlaRS. Acts via tRNA-based rather than protein-based catalysis; rejects L-amino acids rather than detecting D-amino acids in the active site. By recycling D-aminoacyl-tRNA to D-amino acids and free tRNA molecules, this enzyme counteracts the toxicity associated with the formation of D-aminoacyl-tRNA entities in vivo and helps enforce protein L-homochirality. The sequence is that of D-aminoacyl-tRNA deacylase from Ruegeria pomeroyi (strain ATCC 700808 / DSM 15171 / DSS-3) (Silicibacter pomeroyi).